The primary structure comprises 110 residues: G antigen 2E (110 aa).

Residues methionine 1–glutamate 110 form a disordered region. 2 stretches are compositionally biased toward acidic residues: residues phenylalanine 32–glutamate 45 and glutamate 87–glutamate 96.

This sequence belongs to the GAGE family.

This chain is G antigen 2E (GAGE2E), found in Homo sapiens (Human).